Reading from the N-terminus, the 387-residue chain is Methyltransferase phomM (387 aa).

Positions P98–L223 are methyltransferase domain.

Belongs to the class I-like SAM-binding methyltransferase superfamily. Erg6/SMT family.

Its pathway is mycotoxin biosynthesis. Its function is as follows. Methyltransferase; part of the gene cluster that mediates the biosynthesis of the phomopsins, a group of hexapeptide mycotoxins which infects lupins and causes lupinosis disease in livestock. Within the pathway, phomM acts as an S-adenosylmethionine-dependent alpha-N-methyltransferase that catalyzes two successive N-methylation reactions, converting N-desmethyl-phomopsin A to phomopsin A and phomopsin A further to an N,N-dimethylated congener called phomopsin E. The pathway starts with the processing of the precursor phomA by several endopeptidases including kexin proteases as well as the cluster-specific S41 family peptidase phomP1 and the oligopeptidase phomG to produce 10 identical copies of the hexapeptide Tyr-Val-Ile-Pro-Ile-Asp. After being excised from the precursor peptide, the core peptides are cyclized and modified post-translationally by enzymes encoded within the gene cluster. The timing and order of proteolysis of the phomA precursor and PTMs are still unknown. Two tyrosinase-like enzymes, phomQ1 and phomQ2, catalyze the chlorination and hydroxylation of Tyr, respectively. PhomYb, is proposed to be involved in the construction of the macrocyclic structure. The other 4 ustYa family proteins may be involved in PTMs that generate the unique structure of phomopsin A. PhomYa is required for the hydroxylation of C-beta of Tyr. PhomYc, phomYd, and phomYe are responsible for the biosynthesis of 2,3-dehydroisoleucine (dIle), 2,3-dehydroaspartic acid (dAsp), and 3,4-dehydroproline (dPro), respectively. While dIle formation by phomYc is indispensable for the installation of dAsp by phomYd, the order of the other PTMs have not been elucidated yet. Most of the biosynthetic enzymes likely have broad substrate specificity, and thus, there might be a metabolic grid from a precursor to phomopsin A. The enzyme(s) responsible for the biosynthesis of 3,4-dehydrovaline (dVal) have also not been identified yet. Finally, phomM acts as an S-adenosylmethionine-dependent alpha-N-methyltransferase that catalyzes two successive N-methylation reactions, converting N-desmethyl-phomopsin A to phomopsin A and phomopsin A further to an N,N-dimethylated congener called phomopsin E. The sequence is that of Methyltransferase phomM from Diaporthe leptostromiformis (Lupinosis disease fungus).